A 719-amino-acid chain; its full sequence is Protein ENHANCED DISEASE RESISTANCE 2-like (719 aa).

Residues 3–110 (KVVYEGWMVR…WKEKIECVID (108 aa)) form the PH domain. The segment at 134–173 (AGRTASSSDHESPFSALEDENDSQRDLLRRTTIGNGPPES) is disordered. An START domain is found at 180-392 (EFDAELSNQS…VSGLREWFSQ (213 aa)). Residues 414 to 478 (ALGKGGKHHH…ETDAKKTEEP (65 aa)) are disordered. The segment covering 426–439 (SLSIDQTNGASRNS) has biased composition (polar residues). A compositionally biased stretch (acidic residues) spans 442 to 461 (MDEDSDDDDEFQIPDSEPEP). Positions 462-477 (ETSKQDQETDAKKTEE) are enriched in basic and acidic residues. Residues 665-685 (GVLGLVIGVITSLVVEMAFLV) form a helical membrane-spanning segment.

It is found in the endoplasmic reticulum membrane. It localises to the cell membrane. The protein resides in the endosome membrane. Functionally, binds to phosphatidylinositol-4-phosphate (PtdIns(4)P). May regulate the salicylic acid- (SA-) mediated resistance to pathogens. The polypeptide is Protein ENHANCED DISEASE RESISTANCE 2-like (EDR2L) (Arabidopsis thaliana (Mouse-ear cress)).